The following is a 188-amino-acid chain: Ribosome maturation factor RimP (188 aa).

This sequence belongs to the RimP family.

It is found in the cytoplasm. Its function is as follows. Required for maturation of 30S ribosomal subunits. This is Ribosome maturation factor RimP from Corynebacterium aurimucosum (strain ATCC 700975 / DSM 44827 / CIP 107346 / CN-1) (Corynebacterium nigricans).